We begin with the raw amino-acid sequence, 397 residues long: Elongation factor Tu (397 aa).

The tr-type G domain maps to 10–207 (LPHVNVGTIG…TLDSYIPDPV (198 aa)). Residues 19 to 26 (GHVDHGKT) form a G1 region. 19-26 (GHVDHGKT) contributes to the GTP binding site. T26 is a Mg(2+) binding site. Positions 60 to 64 (GITIN) are G2. Positions 81–84 (DCPG) are G3. Residues 81–85 (DCPGH) and 136–139 (NKAD) each bind GTP. Residues 136 to 139 (NKAD) are G4. A G5 region spans residues 174–176 (SAR).

Belongs to the TRAFAC class translation factor GTPase superfamily. Classic translation factor GTPase family. EF-Tu/EF-1A subfamily. As to quaternary structure, monomer.

It is found in the cytoplasm. It carries out the reaction GTP + H2O = GDP + phosphate + H(+). Functionally, GTP hydrolase that promotes the GTP-dependent binding of aminoacyl-tRNA to the A-site of ribosomes during protein biosynthesis. The sequence is that of Elongation factor Tu from Pseudomonas fluorescens (strain SBW25).